The primary structure comprises 682 residues: E3 ubiquitin-protein ligase RNF103 (682 aa).

Helical transmembrane passes span 6–26 (FFLL…EAIV), 326–346 (LFVL…FITQ), 366–386 (LLII…LDSF), and 411–431 (MFYS…GLLI). The segment covering 525 to 542 (EEMSESSQDTENDSDSDN) has biased composition (acidic residues). The tract at residues 525–549 (EEMSESSQDTENDSDSDNTDTFSSS) is disordered. The RING-type zinc-finger motif lies at 618-660 (CVVCLENFENGCLLMGLPCGHVFHQNCIVMWLAGGRHCCPVCR).

As to quaternary structure, interacts with DERL1 and VCP. As to expression, expressed in different tissues including hippocampus, cerebral cortex, heart, kidney, spleen and lung. Expression is increased in hippocampus and frontal cortex after chronic treatment with antidepressants.

It is found in the endoplasmic reticulum membrane. It carries out the reaction S-ubiquitinyl-[E2 ubiquitin-conjugating enzyme]-L-cysteine + [acceptor protein]-L-lysine = [E2 ubiquitin-conjugating enzyme]-L-cysteine + N(6)-ubiquitinyl-[acceptor protein]-L-lysine.. The protein operates within protein modification; protein ubiquitination. Acts as an E2-dependent E3 ubiquitin-protein ligase, probably involved in the ER-associated protein degradation pathway. This chain is E3 ubiquitin-protein ligase RNF103 (Rnf103), found in Rattus norvegicus (Rat).